We begin with the raw amino-acid sequence, 169 residues long: ATP synthase subunit b (169 aa).

The chain crosses the membrane as a helical span at residues 3-23; the sequence is IKILLLVLPFFAFASEHGGVN.

It belongs to the ATPase B chain family. F-type ATPases have 2 components, F(1) - the catalytic core - and F(0) - the membrane proton channel. F(1) has five subunits: alpha(3), beta(3), gamma(1), delta(1), epsilon(1). F(0) has three main subunits: a(1), b(2) and c(10-14). The alpha and beta chains form an alternating ring which encloses part of the gamma chain. F(1) is attached to F(0) by a central stalk formed by the gamma and epsilon chains, while a peripheral stalk is formed by the delta and b chains.

The protein localises to the cell inner membrane. F(1)F(0) ATP synthase produces ATP from ADP in the presence of a proton or sodium gradient. F-type ATPases consist of two structural domains, F(1) containing the extramembraneous catalytic core and F(0) containing the membrane proton channel, linked together by a central stalk and a peripheral stalk. During catalysis, ATP synthesis in the catalytic domain of F(1) is coupled via a rotary mechanism of the central stalk subunits to proton translocation. Functionally, component of the F(0) channel, it forms part of the peripheral stalk, linking F(1) to F(0). This is ATP synthase subunit b from Campylobacter curvus (strain 525.92).